We begin with the raw amino-acid sequence, 161 residues long: MKVTSYSRILIILAALVGALVVPLKAQDSQQDYVNAHNQARSQIGVGPMQWDEGLAAYARNYANQLKGDCRLVHSRGPYGENLAKSGGDLSGVAAVNLWVNEKANYNYDTNTCNGVCGHYTQVVWRNSVRLGCAKVRCNNGGTIISCNYDPPGNYANQKPY.

The signal sequence occupies residues 1–26; that stretch reads MKVTSYSRILIILAALVGALVVPLKA. One can recognise an SCP domain in the interval 34-149; that stretch reads VNAHNQARSQ…NGGTIISCNY (116 aa). 3 disulfide bridges follow: Cys70–Cys138, Cys113–Cys117, and Cys133–Cys147.

It belongs to the CRISP family. As to expression, expressed in flowers, stems and roots but not in leaves.

In terms of biological role, probably involved in the defense reaction of plants against pathogens. The protein is Pathogenesis-related protein 1 of Arabidopsis thaliana (Mouse-ear cress).